The following is a 740-amino-acid chain: DNA-directed RNA polymerase subunit beta' (740 aa).

Residues Cys65, Cys67, Cys103, and Cys106 each contribute to the Zn(2+) site. Residues Asp539, Asp541, and Asp543 each coordinate Mg(2+).

Belongs to the RNA polymerase beta' chain family. RpoC1 subfamily. In plastids the minimal PEP RNA polymerase catalytic core is composed of four subunits: alpha, beta, beta', and beta''. When a (nuclear-encoded) sigma factor is associated with the core the holoenzyme is formed, which can initiate transcription. It depends on Mg(2+) as a cofactor. The cofactor is Zn(2+).

It localises to the plastid. The protein localises to the chloroplast. The enzyme catalyses RNA(n) + a ribonucleoside 5'-triphosphate = RNA(n+1) + diphosphate. In terms of biological role, DNA-dependent RNA polymerase catalyzes the transcription of DNA into RNA using the four ribonucleoside triphosphates as substrates. The polypeptide is DNA-directed RNA polymerase subunit beta' (Ostreococcus tauri).